The following is a 330-amino-acid chain: Aspartate--ammonia ligase (330 aa).

This sequence belongs to the class-II aminoacyl-tRNA synthetase family. AsnA subfamily.

It is found in the cytoplasm. It carries out the reaction L-aspartate + NH4(+) + ATP = L-asparagine + AMP + diphosphate + H(+). The protein operates within amino-acid biosynthesis; L-asparagine biosynthesis; L-asparagine from L-aspartate (ammonia route): step 1/1. The chain is Aspartate--ammonia ligase from Haemophilus influenzae (strain 86-028NP).